We begin with the raw amino-acid sequence, 239 residues long: MNSNTQPASGNFHQSELDKFAALANRWWDADGPQKPLHALNPVRLDYVSARLDLAGARVLDVGCGGGLLSESMARLGAQVTAIDLAPELVKVARLHGLESSVQVDYRVQSVEDLAAEQTGSFDAVTCMEMLEHVPDPTAIIRACARLLKPGGKLFLSTLNRTPAAFALAVVGAEYIARLLPRGTHHYKDFIKPAELAAWLRNAELQLEDVSGMLYEPWRNRARLSSRTEVNYLAYAVKP.

Residues Arg44, Gly63, Asp84, and Met128 each coordinate S-adenosyl-L-methionine.

The protein belongs to the methyltransferase superfamily. UbiG/COQ3 family.

The enzyme catalyses a 3-demethylubiquinol + S-adenosyl-L-methionine = a ubiquinol + S-adenosyl-L-homocysteine + H(+). It carries out the reaction a 3-(all-trans-polyprenyl)benzene-1,2-diol + S-adenosyl-L-methionine = a 2-methoxy-6-(all-trans-polyprenyl)phenol + S-adenosyl-L-homocysteine + H(+). It participates in cofactor biosynthesis; ubiquinone biosynthesis. In terms of biological role, O-methyltransferase that catalyzes the 2 O-methylation steps in the ubiquinone biosynthetic pathway. This is Ubiquinone biosynthesis O-methyltransferase from Xanthomonas oryzae pv. oryzae (strain MAFF 311018).